The sequence spans 292 residues: Homoserine kinase (292 aa).

81–91 (RPRSGLGSSGA) is a binding site for ATP.

The protein belongs to the GHMP kinase family. Homoserine kinase subfamily.

The protein resides in the cytoplasm. The enzyme catalyses L-homoserine + ATP = O-phospho-L-homoserine + ADP + H(+). Its pathway is amino-acid biosynthesis; L-threonine biosynthesis; L-threonine from L-aspartate: step 4/5. Functionally, catalyzes the ATP-dependent phosphorylation of L-homoserine to L-homoserine phosphate. The protein is Homoserine kinase of Thermococcus gammatolerans (strain DSM 15229 / JCM 11827 / EJ3).